Reading from the N-terminus, the 450-residue chain is LanC-like protein 2 (450 aa).

G2 carries N-myristoyl glycine lipidation. The interaction with inositol phospholipids stretch occupies residues 2-15; that stretch reads GETMSKRLKLHLGG. Position 198 is a phosphotyrosine (Y198).

Belongs to the LanC-like protein family. As to quaternary structure, interacts with an array of inositol phospholipids such as phosphatidylinositol 3-phosphate (PI3P), phosphatidylinositol 4-phosphate (PI4P) and phosphatidylinositol 5-phosphate (PI5P). PIP-binding enhances membrane association. Myristoylated. Essential for membrane association. In terms of tissue distribution, expressed in brain and testis.

The protein resides in the nucleus. It localises to the cytoplasm. It is found in the cell membrane. Its function is as follows. Necessary for abscisic acid (ABA) binding on the cell membrane and activation of the ABA signaling pathway in granulocytes. This is LanC-like protein 2 (LANCL2) from Homo sapiens (Human).